Here is a 334-residue protein sequence, read N- to C-terminus: N-acetyl-gamma-glutamyl-phosphate reductase (334 aa).

The active site involves Cys-154.

It belongs to the NAGSA dehydrogenase family. Type 1 subfamily.

It is found in the cytoplasm. It carries out the reaction N-acetyl-L-glutamate 5-semialdehyde + phosphate + NADP(+) = N-acetyl-L-glutamyl 5-phosphate + NADPH + H(+). It participates in amino-acid biosynthesis; L-arginine biosynthesis; N(2)-acetyl-L-ornithine from L-glutamate: step 3/4. Catalyzes the NADPH-dependent reduction of N-acetyl-5-glutamyl phosphate to yield N-acetyl-L-glutamate 5-semialdehyde. This is N-acetyl-gamma-glutamyl-phosphate reductase from Buchnera aphidicola subsp. Acyrthosiphon pisum (strain Tuc7).